A 673-amino-acid chain; its full sequence is G-protein-signaling modulator 1 (673 aa).

The tract at residues 1 to 507 (MASPAPPVAE…DLLSKFQSSR (507 aa)) is mediates association with membranes. TPR repeat units lie at residues 28–61 (CLELALEGERLCKAGDFKAGVAFFEAAVQVGTED), 66–99 (SAIYSQLGNAYFYLKEYARALQFHKHDLLLARTI), 106–139 (AKASGNLGNTLKVLGRFDEAIVCCQRHLDIAQEQ), 146–178 (ARALYNIGNVYHAKGKQLSWNAAQDPGHLPPDV), 180–199 (ETLHRASEFYERNLSLVKEL), 206–239 (GRAYGNLGNTHYLLGNFTEATTFHKERLAIAKEF), 246–279 (RRAYSNLGNAHIFLGRFDVAAEHYKKTLQLSRQL), 286–319 (AQACYSLGNTYTLLQDYERAAEYHLRHLVIAQEL), and 326–359 (GRACWSLGNAYVSMGSPAQALTFAKKHLQISQEI). The tract at residues 361–485 (DRNGELTARM…VRVQVPRTGI (125 aa)) is interaction with STK11/LKB1. S410 is modified (phosphoserine). At R418 the chain carries Omega-N-methylarginine. Residues 420–439 (PLDREQNGETHHTGDWRGPG) show a composition bias toward basic and acidic residues. Positions 420–475 (PLDREQNGETHHTGDWRGPGRDSLPLPMRSRKYQEGPDAIERRPREGSHSPLDSAD) are disordered. S442, S467, S469, S490, and S491 each carry phosphoserine. The segment covering 451–467 (KYQEGPDAIERRPREGS) has biased composition (basic and acidic residues). The GoLoco 1 domain maps to 493-515 (EECFFDLLSKFQSSRMDDQRCPL). Positions 508–531 (MDDQRCPLEEGQAGAAEATAAPSV) are disordered. Positions 516 to 528 (EEGQAGAAEATAA) are enriched in low complexity. S543 and S567 each carry phosphoserine. 3 GoLoco domains span residues 546 to 568 (TEEFFDLIASSQSRRLDDQRASV), 594 to 616 (GDEFFNMLIKYQSSRIDDQRCPP), and 628 to 650 (DEDFFSLIQRVQAKRMDEQRVDL). The disordered stretch occupies residues 644-673 (DEQRVDLAGSPEQEASGLPDPQQQCPPGAS). The residue at position 653 (S653) is a Phosphoserine. A compositionally biased stretch (polar residues) spans 664 to 673 (PQQQCPPGAS).

Belongs to the GPSM family. In terms of assembly, interacts with GNAI1 and GNAI2 preferentially in their GDP-bound state. May also interact with GNAO1. Interacts with INSC/inscuteable and FRMPD1. Interacts with GNAI3. Interacts with STK11/LKB1 and MACF1. Post-translationally, phosphorylation regulates interaction with G(i/o) alpha. In terms of tissue distribution, expressed in neural progenitor cells (at protein level).

The protein localises to the cytoplasm. It is found in the cytosol. Its subcellular location is the endoplasmic reticulum membrane. The protein resides in the golgi apparatus membrane. It localises to the cell membrane. Its function is as follows. Guanine nucleotide dissociation inhibitor (GDI) which functions as a receptor-independent activator of heterotrimeric G-protein signaling. Keeps G(i/o) alpha subunit in its GDP-bound form thus uncoupling heterotrimeric G-proteins signaling from G protein-coupled receptors. Controls spindle orientation and asymmetric cell fate of cerebral cortical progenitors. May also be involved in macroautophagy in intestinal cells. May play a role in drug addiction. This is G-protein-signaling modulator 1 (Gpsm1) from Mus musculus (Mouse).